Here is an 86-residue protein sequence, read N- to C-terminus: Conotoxin Ec15a (86 aa).

The N-terminal stretch at 1–23 is a signal peptide; it reads MEKLTILILVATVLLAIQVLGQG. The propeptide occupies 24–49; the sequence is EGEKPPKEWVQQYAAKRLWALMKGPR. A Pyrrolidone carboxylic acid modification is found at Gln-50.

The protein belongs to the conotoxin O2 superfamily. Post-translationally, contains 4 disulfide bonds. Expressed by the venom duct.

Its subcellular location is the secreted. The sequence is that of Conotoxin Ec15a from Conus emaciatus (False virgin cone).